Reading from the N-terminus, the 484-residue chain is tRNA sulfurtransferase (484 aa).

One can recognise a THUMP domain in the interval 63–167; sequence KEMGERLTCM…DKRLFVIHSQ (105 aa). ATP is bound by residues 185-186, Lys-267, Gly-289, and Gln-298; that span reads LM. Cys-346 and Cys-457 are joined by a disulfide. Residues 405–483 form the Rhodanese domain; the sequence is ALAGQIVIDI…GHANVRVYRP (79 aa). Cys-457 acts as the Cysteine persulfide intermediate in catalysis.

It belongs to the ThiI family.

The protein localises to the cytoplasm. The enzyme catalyses [ThiI sulfur-carrier protein]-S-sulfanyl-L-cysteine + a uridine in tRNA + 2 reduced [2Fe-2S]-[ferredoxin] + ATP + H(+) = [ThiI sulfur-carrier protein]-L-cysteine + a 4-thiouridine in tRNA + 2 oxidized [2Fe-2S]-[ferredoxin] + AMP + diphosphate. It carries out the reaction [ThiS sulfur-carrier protein]-C-terminal Gly-Gly-AMP + S-sulfanyl-L-cysteinyl-[cysteine desulfurase] + AH2 = [ThiS sulfur-carrier protein]-C-terminal-Gly-aminoethanethioate + L-cysteinyl-[cysteine desulfurase] + A + AMP + 2 H(+). The protein operates within cofactor biosynthesis; thiamine diphosphate biosynthesis. Catalyzes the ATP-dependent transfer of a sulfur to tRNA to produce 4-thiouridine in position 8 of tRNAs, which functions as a near-UV photosensor. Also catalyzes the transfer of sulfur to the sulfur carrier protein ThiS, forming ThiS-thiocarboxylate. This is a step in the synthesis of thiazole, in the thiamine biosynthesis pathway. The sulfur is donated as persulfide by IscS. The chain is tRNA sulfurtransferase from Pseudomonas fluorescens (strain Pf0-1).